The primary structure comprises 102 residues: Cytochrome b (102 aa).

3 helical membrane passes run 1–21 (FGSL…FLAM), 45–66 (WLIR…YMHI), and 81–101 (WNIG…GYVF). Residues H51 and H65 each contribute to the heme b site.

It belongs to the cytochrome b family. The cytochrome bc1 complex contains 3 respiratory subunits (MT-CYB, CYC1 and UQCRFS1), 2 core proteins (UQCRC1 and UQCRC2) and probably 6 low-molecular weight proteins. Requires heme b as cofactor.

Its subcellular location is the mitochondrion inner membrane. Functionally, component of the ubiquinol-cytochrome c reductase complex (complex III or cytochrome b-c1 complex) that is part of the mitochondrial respiratory chain. The b-c1 complex mediates electron transfer from ubiquinol to cytochrome c. Contributes to the generation of a proton gradient across the mitochondrial membrane that is then used for ATP synthesis. The protein is Cytochrome b (mt-cyb) of Plethodon yonahlossee (Yonahlossee salamander).